Here is a 324-residue protein sequence, read N- to C-terminus: Methionyl-tRNA formyltransferase (324 aa).

A (6S)-5,6,7,8-tetrahydrofolate-binding site is contributed by 109–112; that stretch reads SLLP. The tract at residues 305–324 is disordered; it reads LHPGESFHKATQDNQGASET.

It belongs to the Fmt family.

The catalysed reaction is L-methionyl-tRNA(fMet) + (6R)-10-formyltetrahydrofolate = N-formyl-L-methionyl-tRNA(fMet) + (6S)-5,6,7,8-tetrahydrofolate + H(+). In terms of biological role, attaches a formyl group to the free amino group of methionyl-tRNA(fMet). The formyl group appears to play a dual role in the initiator identity of N-formylmethionyl-tRNA by promoting its recognition by IF2 and preventing the misappropriation of this tRNA by the elongation apparatus. In Nitrosomonas europaea (strain ATCC 19718 / CIP 103999 / KCTC 2705 / NBRC 14298), this protein is Methionyl-tRNA formyltransferase.